A 38-amino-acid polypeptide reads, in one-letter code: Bacteriocin BAC79 (38 aa).

With respect to regulation, the antimicrobial activity of BAC79 was completely lost after treatment with enzymes trypsin, pepsin, proteinase-K, and carboxypeptidase, while there was no loss of activity with either amylase or lipase. In terms of biological role, has antibacterial activity against a wide spectrum of Gram-positive and Gram-negative bacteria, including L.monocytogenes which is inhibited through disruption of the cell membrane. The protein is Bacteriocin BAC79 of Weissella confusa (Lactobacillus confusus).